A 61-amino-acid polypeptide reads, in one-letter code: Small ribosomal subunit protein uS14 (61 aa).

Positions 24, 27, 40, and 43 each coordinate Zn(2+).

The protein belongs to the universal ribosomal protein uS14 family. Zinc-binding uS14 subfamily. As to quaternary structure, part of the 30S ribosomal subunit. Contacts proteins S3 and S10. Requires Zn(2+) as cofactor.

In terms of biological role, binds 16S rRNA, required for the assembly of 30S particles and may also be responsible for determining the conformation of the 16S rRNA at the A site. This chain is Small ribosomal subunit protein uS14, found in Symbiobacterium thermophilum (strain DSM 24528 / JCM 14929 / IAM 14863 / T).